The sequence spans 388 residues: tRNA (guanine(26)-N(2))-dimethyltransferase (388 aa).

In terms of domain architecture, Trm1 methyltransferase spans R4–I383. 4 residues coordinate S-adenosyl-L-methionine: R41, R78, D94, and A123. Residues C251, C254, C271, and C274 each coordinate Zn(2+).

This sequence belongs to the class I-like SAM-binding methyltransferase superfamily. Trm1 family.

It carries out the reaction guanosine(26) in tRNA + 2 S-adenosyl-L-methionine = N(2)-dimethylguanosine(26) in tRNA + 2 S-adenosyl-L-homocysteine + 2 H(+). Functionally, dimethylates a single guanine residue at position 26 of a number of tRNAs using S-adenosyl-L-methionine as donor of the methyl groups. This is tRNA (guanine(26)-N(2))-dimethyltransferase from Methanosarcina acetivorans (strain ATCC 35395 / DSM 2834 / JCM 12185 / C2A).